The sequence spans 456 residues: Iroquois-class homeodomain protein irx-2 (456 aa).

The segment at residues 110 to 172 (DPAYRKNATR…NARRRLKKEN (63 aa)) is a DNA-binding region (homeobox; TALE-type). Disordered stretches follow at residues 172 to 214 (NKMT…AEDE), 246 to 320 (CESG…PASK), and 434 to 456 (RPTN…QPYP). Basic and acidic residues-rich tracts occupy residues 192–205 (GERV…KAQD) and 246–256 (CESGSESKEKY). The segment covering 257-269 (DDDEDEEEGDEED) has biased composition (acidic residues). Residues 291–318 (NHQQDGSPRNSNKTSLDNGMSPSSQTPA) are compositionally biased toward polar residues.

It belongs to the TALE/IRO homeobox family. As to expression, expressed in the neural plate in overlapping patterns with other irx members, which all share an anterior border of expression. Also expressed in the placodes. Broadly expressed in the tailbud rhombencephalon (hindbrain). Outside the nervous system and at tailbud stages, expressed in the developing otic vesicle, branchial arches, prospective heart region and pronephros.

It localises to the nucleus. Acts partially redundantly with other irx members in neural patterning. Required for formation of the posterior forebrain, midbrain, hindbrain, and to a lesser extent, spinal cord. Acts early in neural plate development to induce expression of some but not all proneural genes, and specify a neural precursor state. Also up-regulates repressors that prevent neuronal differentiation. Patterns the neuroectoderm in both the anterior/posterior and dorsal/ventral axes. Probably dispensable for pronephric kidney development. This Xenopus tropicalis (Western clawed frog) protein is Iroquois-class homeodomain protein irx-2.